The primary structure comprises 696 residues: D-(-)-3-hydroxybutyrate oligomer hydrolase (696 aa).

The signal sequence occupies residues 1 to 20; the sequence is MTRLGWGRRMVFGAALAAVA. Serine 309 (charge relay system) is an active-site residue.

Belongs to the D-(-)-3-hydroxybutyrate oligomer hydrolase family.

It localises to the secreted. The catalysed reaction is (3R)-hydroxybutanoate dimer + H2O = 2 (R)-3-hydroxybutanoate + H(+). The protein operates within lipid metabolism; butanoate metabolism. Its function is as follows. Participates in the degradation of poly-3-hydroxybutyrate (PHB). It works downstream of poly(3-hydroxybutyrate) depolymerase, hydrolyzing D(-)-3-hydroxybutyrate oligomers of various length (3HB-oligomers) into 3HB-monomers. The sequence is that of D-(-)-3-hydroxybutyrate oligomer hydrolase from Burkholderia lata (strain ATCC 17760 / DSM 23089 / LMG 22485 / NCIMB 9086 / R18194 / 383).